Reading from the N-terminus, the 255-residue chain is MSSNILAMVAMQLLLIRIVSSQNVTNEYLNHQCNNTQGTYTRGSTFEKNLNQVIRNISHLHLRYGYTYNSNVEAYEVSKDPNIVFVLLQCRGDSYGSKCHSCLHTAFSGLRERCRGNKGAIIWYDQCVLEISSVNTKGRIRYDSFFNMTNVKNVSSNAEQFKNKRKDLFHKLLLGATKDVSDSNDAYAVGETRIGRNKMYAMMQCALDLTTNGCYVCLEWIIGRYDSFYFDRRQGTRVLSRSCSLRYELYPFLRR.

Positions 1-21 (MSSNILAMVAMQLLLIRIVSS) are cleaved as a signal peptide. Gnk2-homologous domains follow at residues 28–136 (YLNH…SVNT) and 142–252 (YDSF…LYPF).

The protein belongs to the cysteine-rich repeat secretory protein family.

It localises to the secreted. This is Putative cysteine-rich repeat secretory protein 13 (CRRSP13) from Arabidopsis thaliana (Mouse-ear cress).